The chain runs to 268 residues: UPF0328 protein ECU05_1640/ECU11_0090 (268 aa).

Belongs to the UPF0328 family.

In Encephalitozoon cuniculi (strain GB-M1) (Microsporidian parasite), this protein is UPF0328 protein ECU05_1640/ECU11_0090.